The following is a 285-amino-acid chain: 1,4-dihydroxy-2-naphthoyl-CoA synthase (285 aa).

Substrate contacts are provided by residues Arg45, 84–88 (AGGDQ), Tyr97, 129–133 (YSIGG), Thr155, Ser161, Tyr258, and Lys273. Residue 154–156 (QTG) participates in hydrogencarbonate binding.

Belongs to the enoyl-CoA hydratase/isomerase family. MenB subfamily. Homohexamer. Requires hydrogencarbonate as cofactor.

The enzyme catalyses 2-succinylbenzoyl-CoA + H(+) = 1,4-dihydroxy-2-naphthoyl-CoA + H2O. It participates in quinol/quinone metabolism; 1,4-dihydroxy-2-naphthoate biosynthesis; 1,4-dihydroxy-2-naphthoate from chorismate: step 6/7. The protein operates within quinol/quinone metabolism; menaquinone biosynthesis. Converts o-succinylbenzoyl-CoA (OSB-CoA) to 1,4-dihydroxy-2-naphthoyl-CoA (DHNA-CoA). In Salmonella typhimurium (strain LT2 / SGSC1412 / ATCC 700720), this protein is 1,4-dihydroxy-2-naphthoyl-CoA synthase.